A 953-amino-acid chain; its full sequence is Trafficking kinesin-binding protein 1 (953 aa).

The region spanning 47 to 354 (LEEQLPHYKL…EELKNLRNKT (308 aa)) is the HAP1 N-terminal domain. A coiled-coil region spans residues 104-356 (QMTKTYNDID…LKNLRNKTMP (253 aa)). Residues 359–509 (TSRRYHSLGL…RRLSLRRENY (151 aa)) are interaction with HGS. An O-linked (GlcNAc) serine glycan is attached at serine 447. The interval 472-495 (AADLGNDERSKKPGTPGTPGSHDL) is disordered. A coiled-coil region spans residues 492-532 (SHDLETALRRLSLRRENYLSERRFFEEEQERKLQELAEKGE). The residue at position 537 (serine 537) is a Phosphoserine. The interval 658 to 672 (PGKCMSQTNSTFTFT) is interaction with OGT. 2 O-linked (GlcNAc) serine glycosylation sites follow: serine 680 and serine 719. Residue serine 719 is modified to Phosphoserine. The interval 777-796 (VIPSTPPNSPMQTPTSSPPS) is disordered. A compositionally biased stretch (low complexity) spans 786-796 (PMQTPTSSPPS). Residue serine 919 is modified to Phosphoserine. An O-linked (GlcNAc) threonine glycan is attached at threonine 935.

Belongs to the milton family. As to quaternary structure, interacts with RHOT1 and RHOT2. Found in a complex with KIF5B, OGT, RHOT1 and RHOT2. Interacts with HGS. Interacts with GABRA1. Interacts with KIF5C. Interacts with OGT; stable interaction is not required for glycosylation of this protein by OGT. Isoform 1 interacts with OGT. In terms of processing, O-glycosylated. Glycosylated by OGT; glycosylation in response to increased extracellular glucose levels is required for and leads to regulation of mitochondrial motility by OGT. As to expression, high expression in spinal cord and moderate expression in all other tissues and specific brain regions examined. Expressed in all cell lines examined.

The protein localises to the cytoplasm. It localises to the nucleus. The protein resides in the mitochondrion. It is found in the early endosome. Its subcellular location is the endosome. The protein localises to the mitochondrion membrane. It localises to the cell cortex. Its function is as follows. Involved in the regulation of endosome-to-lysosome trafficking, including endocytic trafficking of EGF-EGFR complexes and GABA-A receptors. Involved in mitochondrial motility. When O-glycosylated, abolishes mitochondrial motility. Crucial for recruiting OGT to the mitochondrial surface of neuronal processes. TRAK1 and RHOT form an essential protein complex that links KIF5 to mitochondria for light chain-independent, anterograde transport of mitochondria. This is Trafficking kinesin-binding protein 1 (TRAK1) from Homo sapiens (Human).